We begin with the raw amino-acid sequence, 130 residues long: Glycine cleavage system H protein (130 aa).

Residues 23–105 (IGIIGITDFA…YGKGWMIKVE (83 aa)) enclose the Lipoyl-binding domain. An N6-lipoyllysine modification is found at Lys-64.

It belongs to the GcvH family. In terms of assembly, the glycine cleavage system is composed of four proteins: P, T, L and H. The cofactor is (R)-lipoate.

Its function is as follows. The glycine cleavage system catalyzes the degradation of glycine. The H protein shuttles the methylamine group of glycine from the P protein to the T protein. This Carboxydothermus hydrogenoformans (strain ATCC BAA-161 / DSM 6008 / Z-2901) protein is Glycine cleavage system H protein.